The sequence spans 77 residues: NAD(P)H-quinone oxidoreductase subunit L (77 aa).

Helical transmembrane passes span leucine 12–tyrosine 32 and leucine 47–leucine 67.

This sequence belongs to the complex I NdhL subunit family. NDH-1 can be composed of about 15 different subunits; different subcomplexes with different compositions have been identified which probably have different functions.

The protein resides in the cellular thylakoid membrane. The catalysed reaction is a plastoquinone + NADH + (n+1) H(+)(in) = a plastoquinol + NAD(+) + n H(+)(out). The enzyme catalyses a plastoquinone + NADPH + (n+1) H(+)(in) = a plastoquinol + NADP(+) + n H(+)(out). Its function is as follows. NDH-1 shuttles electrons from an unknown electron donor, via FMN and iron-sulfur (Fe-S) centers, to quinones in the respiratory and/or the photosynthetic chain. The immediate electron acceptor for the enzyme in this species is believed to be plastoquinone. Couples the redox reaction to proton translocation, and thus conserves the redox energy in a proton gradient. Cyanobacterial NDH-1 also plays a role in inorganic carbon-concentration. This chain is NAD(P)H-quinone oxidoreductase subunit L, found in Prochlorococcus marinus subsp. pastoris (strain CCMP1986 / NIES-2087 / MED4).